Reading from the N-terminus, the 434-residue chain is UDP-N-acetylenolpyruvoylglucosamine reductase (434 aa).

Residues 51-238 (IGAAPAGVVE…TAVEFQLTTD (188 aa)) enclose the FAD-binding PCMH-type domain. Arginine 216 is a catalytic residue. Serine 299 serves as the catalytic Proton donor. The active site involves glutamate 425.

The protein belongs to the MurB family. FAD serves as cofactor.

The protein localises to the cytoplasm. It carries out the reaction UDP-N-acetyl-alpha-D-muramate + NADP(+) = UDP-N-acetyl-3-O-(1-carboxyvinyl)-alpha-D-glucosamine + NADPH + H(+). The protein operates within cell wall biogenesis; peptidoglycan biosynthesis. Cell wall formation. The protein is UDP-N-acetylenolpyruvoylglucosamine reductase of Corynebacterium jeikeium (strain K411).